We begin with the raw amino-acid sequence, 1081 residues long: Carbamoyl phosphate synthase large chain (1081 aa).

The interval 1-403 (MPRRNDLNKI…SFQKALRSLE (403 aa)) is carboxyphosphate synthetic domain. 11 residues coordinate ATP: Arg-129, Arg-170, Gly-177, Lys-209, Leu-211, Glu-216, Gly-242, Val-243, His-244, Gln-286, and Glu-300. One can recognise an ATP-grasp 1 domain in the interval 133–329 (KEAMARIGVP…IAKFAAKLAV (197 aa)). 3 residues coordinate Mg(2+): Gln-286, Glu-300, and Asn-302. Mn(2+) contacts are provided by Gln-286, Glu-300, and Asn-302. The segment at 404-553 (TGRFGFGCDR…STYEPEECEV (150 aa)) is oligomerization domain. The tract at residues 554–944 (LPSDKPKVMI…AFAKAELGAG (391 aa)) is carbamoyl phosphate synthetic domain. An ATP-grasp 2 domain is found at 686-878 (EKILHELEIS…LAKIASLVMS (193 aa)). Residues Arg-722, Lys-761, Leu-763, Glu-768, Gly-794, Ile-795, His-796, Ser-797, Gln-837, and Glu-849 each contribute to the ATP site. Mg(2+) contacts are provided by Gln-837, Glu-849, and Asn-851. Mn(2+) contacts are provided by Gln-837, Glu-849, and Asn-851. An MGS-like domain is found at 945 to 1081 (VILATTGTVF…DVKALQDYLG (137 aa)). The tract at residues 945–1081 (VILATTGTVF…DVKALQDYLG (137 aa)) is allosteric domain.

Belongs to the CarB family. As to quaternary structure, composed of two chains; the small (or glutamine) chain promotes the hydrolysis of glutamine to ammonia, which is used by the large (or ammonia) chain to synthesize carbamoyl phosphate. Tetramer of heterodimers (alpha,beta)4. Requires Mg(2+) as cofactor. Mn(2+) serves as cofactor.

It catalyses the reaction hydrogencarbonate + L-glutamine + 2 ATP + H2O = carbamoyl phosphate + L-glutamate + 2 ADP + phosphate + 2 H(+). It carries out the reaction hydrogencarbonate + NH4(+) + 2 ATP = carbamoyl phosphate + 2 ADP + phosphate + 2 H(+). Its pathway is amino-acid biosynthesis; L-arginine biosynthesis; carbamoyl phosphate from bicarbonate: step 1/1. It functions in the pathway pyrimidine metabolism; UMP biosynthesis via de novo pathway; (S)-dihydroorotate from bicarbonate: step 1/3. Functionally, large subunit of the glutamine-dependent carbamoyl phosphate synthetase (CPSase). CPSase catalyzes the formation of carbamoyl phosphate from the ammonia moiety of glutamine, carbonate, and phosphate donated by ATP, constituting the first step of 2 biosynthetic pathways, one leading to arginine and/or urea and the other to pyrimidine nucleotides. The large subunit (synthetase) binds the substrates ammonia (free or transferred from glutamine from the small subunit), hydrogencarbonate and ATP and carries out an ATP-coupled ligase reaction, activating hydrogencarbonate by forming carboxy phosphate which reacts with ammonia to form carbamoyl phosphate. This Synechocystis sp. (strain ATCC 27184 / PCC 6803 / Kazusa) protein is Carbamoyl phosphate synthase large chain.